We begin with the raw amino-acid sequence, 622 residues long: 1,4-alpha-glucan branching enzyme GlgB (622 aa).

Catalysis depends on Asp306, which acts as the Nucleophile. Residue Glu358 is the Proton donor of the active site. Positions 581–606 are disordered; it reads YGGSNVGNRGAVHSDPVEKHGHSHSL.

The protein belongs to the glycosyl hydrolase 13 family. GlgB subfamily. Monomer.

The catalysed reaction is Transfers a segment of a (1-&gt;4)-alpha-D-glucan chain to a primary hydroxy group in a similar glucan chain.. Its pathway is glycan biosynthesis; glycogen biosynthesis. Functionally, catalyzes the formation of the alpha-1,6-glucosidic linkages in glycogen by scission of a 1,4-alpha-linked oligosaccharide from growing alpha-1,4-glucan chains and the subsequent attachment of the oligosaccharide to the alpha-1,6 position. This chain is 1,4-alpha-glucan branching enzyme GlgB, found in Salinibacter ruber (strain DSM 13855 / M31).